A 499-amino-acid chain; its full sequence is Aspartyl/glutamyl-tRNA(Asn/Gln) amidotransferase subunit B (499 aa).

Belongs to the GatB/GatE family. GatB subfamily. Heterotrimer of A, B and C subunits.

The catalysed reaction is L-glutamyl-tRNA(Gln) + L-glutamine + ATP + H2O = L-glutaminyl-tRNA(Gln) + L-glutamate + ADP + phosphate + H(+). It carries out the reaction L-aspartyl-tRNA(Asn) + L-glutamine + ATP + H2O = L-asparaginyl-tRNA(Asn) + L-glutamate + ADP + phosphate + 2 H(+). Allows the formation of correctly charged Asn-tRNA(Asn) or Gln-tRNA(Gln) through the transamidation of misacylated Asp-tRNA(Asn) or Glu-tRNA(Gln) in organisms which lack either or both of asparaginyl-tRNA or glutaminyl-tRNA synthetases. The reaction takes place in the presence of glutamine and ATP through an activated phospho-Asp-tRNA(Asn) or phospho-Glu-tRNA(Gln). The polypeptide is Aspartyl/glutamyl-tRNA(Asn/Gln) amidotransferase subunit B (Bartonella bacilliformis (strain ATCC 35685 / KC583 / Herrer 020/F12,63)).